A 357-amino-acid chain; its full sequence is Alanine racemase, catabolic (357 aa).

The active-site Proton acceptor; specific for D-alanine is K33. N6-(pyridoxal phosphate)lysine is present on K33. R129 lines the substrate pocket. Y253 functions as the Proton acceptor; specific for L-alanine in the catalytic mechanism. Substrate is bound at residue M301.

Belongs to the alanine racemase family. The cofactor is pyridoxal 5'-phosphate.

The enzyme catalyses L-alanine = D-alanine. It functions in the pathway amino-acid biosynthesis; D-alanine biosynthesis; D-alanine from L-alanine: step 1/1. Functionally, isomerizes L-alanine to D-alanine which is then likely oxidized to pyruvate by DadA. Shows racemase activity with both alanine stereoisomers, negligible activity with D-cysteine and L-serine, and exhibits no activity with the remaining natural chiral amino acids. The chain is Alanine racemase, catabolic from Pseudomonas putida (strain ATCC 47054 / DSM 6125 / CFBP 8728 / NCIMB 11950 / KT2440).